Reading from the N-terminus, the 188-residue chain is Elongation factor P (188 aa).

An N6-(3,6-diaminohexanoyl)-5-hydroxylysine modification is found at Lys34.

Belongs to the elongation factor P family. In terms of processing, may be beta-lysylated on the epsilon-amino group of Lys-34 by the combined action of EpmA and EpmB, and then hydroxylated on the C5 position of the same residue by EpmC (if this protein is present). Lysylation is critical for the stimulatory effect of EF-P on peptide-bond formation. The lysylation moiety may extend toward the peptidyltransferase center and stabilize the terminal 3-CCA end of the tRNA. Hydroxylation of the C5 position on Lys-34 may allow additional potential stabilizing hydrogen-bond interactions with the P-tRNA.

It is found in the cytoplasm. It functions in the pathway protein biosynthesis; polypeptide chain elongation. Functionally, involved in peptide bond synthesis. Alleviates ribosome stalling that occurs when 3 or more consecutive Pro residues or the sequence PPG is present in a protein, possibly by augmenting the peptidyl transferase activity of the ribosome. Modification of Lys-34 is required for alleviation. This Stenotrophomonas maltophilia (strain R551-3) protein is Elongation factor P.